A 513-amino-acid polypeptide reads, in one-letter code: Xylose import ATP-binding protein XylG (513 aa).

2 ABC transporter domains span residues 5 to 242 (LEMK…VGRE) and 259 to 505 (LRIE…LRSE). 37 to 44 (GENGSGKS) provides a ligand contact to ATP.

This sequence belongs to the ABC transporter superfamily. Xylose importer (TC 3.A.1.2.4) family. In terms of assembly, the complex is composed of two ATP-binding proteins (XylG), two transmembrane proteins (XylH) and a solute-binding protein (XylF).

The protein localises to the cell inner membrane. The catalysed reaction is D-xylose(out) + ATP + H2O = D-xylose(in) + ADP + phosphate + H(+). Part of the ABC transporter complex XylFGH involved in xylose import. Responsible for energy coupling to the transport system. The XylFGH system can also transport ribose in absence of xylose. The sequence is that of Xylose import ATP-binding protein XylG from Escherichia coli (strain K12).